The sequence spans 692 residues: MLSHNALRAFDCSKVIISRRCLTSSTSIYQQSSVHLQETDDGHSGNREKHVSPFERVQNLAADLKNELKAPDSDINEVFNDFKDKIESLKQKLRNPSPMERSHLLANFSSDLLQELSYRSKNMTLDPYQVLNTLCQYKLARSQHFTIVLKYLLYNQSPQDVIALWVKYLETISENPVILLQNSSSRAHMQNIAITTIAYLSLPENTVDINILYKILQIDRKMGQVLPFNMIRRMLSTEFSSLERRDVIIKNLNTLYYQYTVQDSDHFLSQIENAPRWIDLRDLYGQYNKLEGEKNVEIISKFMDKFIDLDKPDQVVTIYNQYSKVFPNSTSLKDCLLRAVSHLRAKSSKEKLDRILAVWNSVIKPGDNIKNTSYATLVNALTDSGNFNHLKEFWEEELPKKFKKDPIVKEAFLLALCQTSPLKYDQVKGELAETVKTKKLFNKVLLLMLDDEKVSEEQFNTFYYNHYPSDGVLPPTLDTLSIKMYANYKFQAEDTRPQFDLLQSVSINPTDYEKVEKITKAFISVCPTVEPIRQLYKQLGTHLNARNYADFISAEFNKPDGTVAEAKNLFSDFLSYQKTRKRNVDNTPLNALLLGFCDKLYKSKHSEYVPYIEKYYNLAKDSSIRVSNLAVSKILFNLATFARNTQQLSDKEVAFINQFMRDLGTNEGFRPNPKDIQILKECDGITVPEKLT.

The N-terminal 30 residues, 1–30 (MLSHNALRAFDCSKVIISRRCLTSSTSIYQ), are a transit peptide targeting the mitochondrion.

The protein resides in the mitochondrion. In terms of biological role, may be involved in the control of meiotic sister-chromatid recombination. The sequence is that of Meiotic sister-chromatid recombination protein 6, mitochondrial (MSC6) from Saccharomyces cerevisiae (strain ATCC 204508 / S288c) (Baker's yeast).